The chain runs to 325 residues: Aldose 1-epimerase (325 aa).

Residue 73 to 74 (NR) participates in substrate binding. The active-site Proton donor is the histidine 177. Aspartate 230 is a substrate binding site. Catalysis depends on glutamate 283, which acts as the Proton acceptor.

The protein belongs to the aldose epimerase family.

It carries out the reaction alpha-D-glucose = beta-D-glucose. It participates in carbohydrate metabolism; hexose metabolism. The sequence is that of Aldose 1-epimerase (galM) from Bacillus subtilis (strain 168).